We begin with the raw amino-acid sequence, 1423 residues long: ABC transporter G family member 40 (1423 aa).

A compositionally biased stretch (polar residues) spans 1 to 19 (MEGTSFHQASNSMRRNSSV). Residues 1 to 36 (MEGTSFHQASNSMRRNSSVWKKDSGREIFSRSSREE) are disordered. N-linked (GlcNAc...) asparagine glycosylation is present at N16. The span at 20 to 34 (WKKDSGREIFSRSSR) shows a compositional bias: basic and acidic residues. The ABC transporter 1 domain maps to 154-427 (LNTLHLVPNR…FETMGFKCPP (274 aa)). 187-194 (GPPSSGKT) is a binding site for ATP. N376 carries an N-linked (GlcNAc...) asparagine glycan. The ABC transmembrane type-2 1 domain occupies 505-718 (ELVKTSFSRE…GQNAILANEF (214 aa)). 6 helical membrane passes run 523-543 (FVYYFKFGQLLVMAFLTMTLF), 562-582 (ALFFILMMLMFNGMSELSMTI), 611-631 (IPISFMEAALTTFITYYVIGF), 643-663 (ILLVLMNQMASALFKMVAALG), 667-687 (IVANTFGAFAMLVFFALGGVV), and 696-716 (WWIWGYWISPIMYGQNAILAN). N729 is a glycosylation site (N-linked (GlcNAc...) asparagine). A helical membrane pass occupies residues 756-776 (GALLGFVVLFNFGFTLALTFL). The 253-residue stretch at 825–1077 (ITFDNVVYSV…HLINYFESIQ (253 aa)) folds into the ABC transporter 2 domain. ATP is bound at residue 870–877 (GVSGAGKT). N895 carries N-linked (GlcNAc...) asparagine glycosylation. Position 962 is a phosphothreonine (T962). Residues 1150–1364 (TQCMASLWKQ…TLYGLIASQF (215 aa)) enclose the ABC transmembrane type-2 2 domain. 6 consecutive transmembrane segments (helical) span residues 1174-1194 (FLFTIGIALMFGTMFWDLGGK), 1207-1227 (SMYTAVLFLGLQNAASVQPVV), 1257-1277 (IPYVLVQAIVYGLIVYAMIGF), 1284-1304 (FFWYLFFMYGSFLTFTFYGMM), 1314-1334 (IASVVSSAFYGIWNLFSGFLI), and 1341-1361 (VWWEWYYWLCPVAWTLYGLIA). Residue N1375 is glycosylated (N-linked (GlcNAc...) asparagine). A helical membrane pass occupies residues 1395-1415 (VVAAMNVIFPLLFAVIFAIGI).

The protein belongs to the ABC transporter superfamily. ABCG family. PDR (TC 3.A.1.205) subfamily. As to quaternary structure, interacts with LECRK91 and LECRK92. Mostly observed in inflorescence meristems relative to cauline leaves and developing siliques. Ubiquitous with higher levels in leaves, stems and flowers. Also present in primary and lateral roots. In seeds, mainly expressed in the embryo and, to a lesser extent, in the endosperm.

The protein localises to the cell membrane. The catalysed reaction is abscisate(out) + ATP + H2O = abscisate(in) + ADP + phosphate + H(+). With respect to regulation, inhibited by glibenclamide, verapamil and vanadate (ABC transporters inhibitors). High affinity abscisic acid (ABA) transporter that mediates the import of ABA, with a preference for (+)-ABA, through the plasma membrane, especially in guard cells, and is involved in the intercellular and intracellular ABA signaling pathways leading, for example, to stomatal closure, thus conferring drought tolerance. Together with ABCG30, import into the embryo the ABA delivered from the endosperm via ABCG25 and ABCG31-mediated export to suppress radicle extension and subsequent embryonic growth. May be a general defense protein. Functions as a pump to exclude Pb(2+) ions and/or Pb(2+)-containing toxic compounds from the cytoplasm. Contributes to Pb(2+) ions resistance. Confers some resistance to the terpene sclareol. In terms of biological role, (Microbial infection) Involved in resistance response to the pathogenic oomycetes Phytophthora infestans and Phytophthora capsici. In Arabidopsis thaliana (Mouse-ear cress), this protein is ABC transporter G family member 40.